Here is a 139-residue protein sequence, read N- to C-terminus: D-ribose pyranase (139 aa).

H20 functions as the Proton donor in the catalytic mechanism. Residues D28, H106, and 128–130 each bind substrate; that span reads YAN.

The protein belongs to the RbsD / FucU family. RbsD subfamily. As to quaternary structure, homodecamer.

The protein localises to the cytoplasm. It carries out the reaction beta-D-ribopyranose = beta-D-ribofuranose. It functions in the pathway carbohydrate metabolism; D-ribose degradation; D-ribose 5-phosphate from beta-D-ribopyranose: step 1/2. Its function is as follows. Catalyzes the interconversion of beta-pyran and beta-furan forms of D-ribose. The chain is D-ribose pyranase from Serratia proteamaculans (strain 568).